Here is a 510-residue protein sequence, read N- to C-terminus: NAD(P)H-quinone oxidoreductase subunit 2 B, chloroplastic (510 aa).

A run of 12 helical transmembrane segments spans residues 24–44 (LLLF…GLIL), 57–77 (IPWL…ALLF), 99–119 (IFQF…VEYI), 124–144 (MAIT…MFLC), 183–203 (YLLM…WLYG), 227–247 (PGIS…LSPA), 295–315 (WHLL…LIAI), 323–343 (MLAY…IVGD), 347–367 (GYAS…GTFA), 395–415 (ALSS…AGFF), 418–438 (LHLF…IGLL), and 484–504 (MIVC…IIAI).

It belongs to the complex I subunit 2 family. In terms of assembly, NDH is composed of at least 16 different subunits, 5 of which are encoded in the nucleus.

It localises to the plastid. The protein localises to the chloroplast thylakoid membrane. The enzyme catalyses a plastoquinone + NADH + (n+1) H(+)(in) = a plastoquinol + NAD(+) + n H(+)(out). It carries out the reaction a plastoquinone + NADPH + (n+1) H(+)(in) = a plastoquinol + NADP(+) + n H(+)(out). In terms of biological role, NDH shuttles electrons from NAD(P)H:plastoquinone, via FMN and iron-sulfur (Fe-S) centers, to quinones in the photosynthetic chain and possibly in a chloroplast respiratory chain. The immediate electron acceptor for the enzyme in this species is believed to be plastoquinone. Couples the redox reaction to proton translocation, and thus conserves the redox energy in a proton gradient. The sequence is that of NAD(P)H-quinone oxidoreductase subunit 2 B, chloroplastic from Calycanthus floridus var. glaucus (Eastern sweetshrub).